The chain runs to 905 residues: Phosphatidylethanolamine N-methyltransferase (905 aa).

Polar residues-rich tracts occupy residues 1-22 (MTNQ…STSV) and 40-58 (DSNG…SSLN). The disordered stretch occupies residues 1–73 (MTNQIPSASS…SEPERYGCTP (73 aa)). Topologically, residues 1-104 (MTNQIPSASS…DPRFSKTPWD (104 aa)) are lumenal. The chain crosses the membrane as a helical span at residues 105–125 (WIVISSILAQVLLFFMTTGAV). Topologically, residues 126–128 (RRY) are cytoplasmic. A helical membrane pass occupies residues 129-149 (SMMLCFFFWRISYDAGIGFLL). Residues 150–209 (HMQSNHRKVVTWISDFGFFDKENHPKLYDLTKKQLISKMDSSYNYDTSPLEFNSWLVFRH) lie on the Lumenal side of the membrane. A helical transmembrane segment spans residues 210–230 (FVDLILMCDFCSYILMGLAWT). The Cytoplasmic portion of the chain corresponds to 231–236 (CWPKVN). The helical transmembrane segment at 237-257 (IILQFLRIFGGIALIVFNYWV) threads the bilayer. At 258-268 (KMDAHRVVRDY) the chain is on the lumenal side. Residues 269 to 289 (AWYWGDFFFLLRSSLVFNGVF) form a helical membrane-spanning segment. Residues 290-313 (ELAPHPMYSVGYAGYYGMSLLTGS) are Cytoplasmic-facing. The chain crosses the membrane as a helical span at residues 314-334 (YAVLFASILAHAAQFGFLLFV). The Lumenal segment spans residues 335–379 (ENPHIERTYGTDINHARLSPRGEDNEFELPPEHDLVGFVNFDFTR). A Phosphoserine modification is found at S353. The helical transmembrane segment at 380–400 (ISDVALLIIALYSIFIILLSS) threads the bilayer. Topologically, residues 401-408 (NSHYSQFW) are cytoplasmic. The chain crosses the membrane as a helical span at residues 409-429 (AIFQAFVWRFLHSIIHAFILF). Residues 430-456 (YQSKSKAWTKHFIRNGESAAYAWSQWK) are Lumenal-facing. The chain crosses the membrane as a helical span at residues 457–479 (GLYNLTLNMSYISFVMAAWKLYH). At 480 to 493 (LPSNWTYGLVSLRH) the chain is on the cytoplasmic side. The helical transmembrane segment at 494–514 (ALGFGLIALHIYTSVSIYEDL) threads the bilayer. Residues 515–552 (GQYGWFYGDFFLPSRSPKLVYQGIYRYVNNPERFLGCS) are Lumenal-facing. The helical transmembrane segment at 553–573 (AYWGLALISSSAWIFLIAILA) threads the bilayer. Residues 574–905 (QLSNLAIIRL…FDGPSGAKDD (332 aa)) lie on the Cytoplasmic side of the membrane.

This sequence belongs to the class VI-like SAM-binding methyltransferase superfamily. CHO2 family.

It is found in the endoplasmic reticulum membrane. The enzyme catalyses a 1,2-diacyl-sn-glycero-3-phosphoethanolamine + S-adenosyl-L-methionine = a 1,2-diacyl-sn-glycero-3-phospho-N-methylethanolamine + S-adenosyl-L-homocysteine + H(+). It functions in the pathway phospholipid metabolism; phosphatidylcholine biosynthesis. Functionally, catalyzes the first step of the methylation pathway of phosphatidylcholine biosynthesis, the SAM-dependent methylation of phosphatidylethanolamine (PE) to phosphatidylmonomethylethanolamine (PMME). In Schizosaccharomyces pombe (strain 972 / ATCC 24843) (Fission yeast), this protein is Phosphatidylethanolamine N-methyltransferase.